A 377-amino-acid polypeptide reads, in one-letter code: Lactosylceramide 1,3-N-acetyl-beta-D-glucosaminyltransferase B (377 aa).

Residues 1 to 13 are Cytoplasmic-facing; the sequence is MLISARRLRRCQS. A helical; Signal-anchor for type II membrane protein transmembrane segment spans residues 14–30; it reads LQLLASCFVLSLMALLV. The Lumenal segment spans residues 31 to 377; sequence QEDNSLVNHV…DTYPCSAAWS (347 aa). N-linked (GlcNAc...) asparagine glycans are attached at residues asparagine 56, asparagine 167, and asparagine 275.

It belongs to the glycosyltransferase 31 family.

The protein resides in the golgi apparatus membrane. The enzyme catalyses a beta-D-Gal-(1-&gt;4)-beta-D-Glc-(1&lt;-&gt;1)-Cer(d18:1(4E)) + UDP-N-acetyl-alpha-D-glucosamine = a beta-D-GlcNAc-(1-&gt;3)-beta-D-Gal-(1-&gt;4)-beta-D-Glc-(1&lt;-&gt;1)-Cer(d18:1(4E)) + UDP + H(+). It catalyses the reaction a neolactoside nLc4Cer(d18:1(4E)) + UDP-N-acetyl-alpha-D-glucosamine = a neolactoside IV(3)-beta-GlcNAc-nLc4Cer(d18:1(4E)) + UDP + H(+). The protein operates within protein modification; protein glycosylation. Functionally, beta-1,3-N-acetylglucosaminyltransferase that plays a key role in the synthesis of lacto- or neolacto-series carbohydrate chains on glycolipids. This chain is Lactosylceramide 1,3-N-acetyl-beta-D-glucosaminyltransferase B (b3gnt5-b), found in Xenopus laevis (African clawed frog).